The sequence spans 343 residues: Holliday junction branch migration complex subunit RuvB (343 aa).

Residues 1–23 (MSDDFEVVRPEEQAGDEKDRDLR) form a disordered region. Residues 1–183 (MSDDFEVVRP…FGIVQRFEFY (183 aa)) form a large ATPase domain (RuvB-L) region. ATP contacts are provided by residues L22, R23, G64, K67, T68, T69, 130–132 (EDY), R173, Y183, and R220. T68 contacts Mg(2+). The interval 184–254 (SHEELASIIS…TVAAGLKQLN (71 aa)) is small ATPAse domain (RuvB-S). Positions 257 to 343 (GLGLETYDRQ…LGDGQEGLFD (87 aa)) are head domain (RuvB-H). R312 and R317 together coordinate DNA.

Belongs to the RuvB family. Homohexamer. Forms an RuvA(8)-RuvB(12)-Holliday junction (HJ) complex. HJ DNA is sandwiched between 2 RuvA tetramers; dsDNA enters through RuvA and exits via RuvB. An RuvB hexamer assembles on each DNA strand where it exits the tetramer. Each RuvB hexamer is contacted by two RuvA subunits (via domain III) on 2 adjacent RuvB subunits; this complex drives branch migration. In the full resolvosome a probable DNA-RuvA(4)-RuvB(12)-RuvC(2) complex forms which resolves the HJ.

The protein resides in the cytoplasm. It catalyses the reaction ATP + H2O = ADP + phosphate + H(+). The RuvA-RuvB-RuvC complex processes Holliday junction (HJ) DNA during genetic recombination and DNA repair, while the RuvA-RuvB complex plays an important role in the rescue of blocked DNA replication forks via replication fork reversal (RFR). RuvA specifically binds to HJ cruciform DNA, conferring on it an open structure. The RuvB hexamer acts as an ATP-dependent pump, pulling dsDNA into and through the RuvAB complex. RuvB forms 2 homohexamers on either side of HJ DNA bound by 1 or 2 RuvA tetramers; 4 subunits per hexamer contact DNA at a time. Coordinated motions by a converter formed by DNA-disengaged RuvB subunits stimulates ATP hydrolysis and nucleotide exchange. Immobilization of the converter enables RuvB to convert the ATP-contained energy into a lever motion, pulling 2 nucleotides of DNA out of the RuvA tetramer per ATP hydrolyzed, thus driving DNA branch migration. The RuvB motors rotate together with the DNA substrate, which together with the progressing nucleotide cycle form the mechanistic basis for DNA recombination by continuous HJ branch migration. Branch migration allows RuvC to scan DNA until it finds its consensus sequence, where it cleaves and resolves cruciform DNA. In Treponema denticola (strain ATCC 35405 / DSM 14222 / CIP 103919 / JCM 8153 / KCTC 15104), this protein is Holliday junction branch migration complex subunit RuvB.